The primary structure comprises 466 residues: UDP-N-acetylmuramate--L-alanine ligase (466 aa).

119 to 125 (GTHGKTT) contacts ATP.

It belongs to the MurCDEF family.

Its subcellular location is the cytoplasm. The enzyme catalyses UDP-N-acetyl-alpha-D-muramate + L-alanine + ATP = UDP-N-acetyl-alpha-D-muramoyl-L-alanine + ADP + phosphate + H(+). The protein operates within cell wall biogenesis; peptidoglycan biosynthesis. Functionally, cell wall formation. This chain is UDP-N-acetylmuramate--L-alanine ligase, found in Cytophaga hutchinsonii (strain ATCC 33406 / DSM 1761 / CIP 103989 / NBRC 15051 / NCIMB 9469 / D465).